We begin with the raw amino-acid sequence, 147 residues long: MLKVKILRLASGYGLPLPSYATPKSAGLDLYAAVDSKLVVHPGGRCAVKTGVALELPDGYEAQIRSRSGLAANFGICVLNAPGTIDSDYRGEITVVLSNFGSEDYVISRGDRVAQMVIAPVERVEWEEVNSITATSRGEGGFGSTGT.

Substrate-binding positions include 67–69 (RSG), asparagine 80, and 84–86 (TID).

Belongs to the dUTPase family. It depends on Mg(2+) as a cofactor.

The catalysed reaction is dUTP + H2O = dUMP + diphosphate + H(+). The protein operates within pyrimidine metabolism; dUMP biosynthesis; dUMP from dCTP (dUTP route): step 2/2. Its function is as follows. This enzyme is involved in nucleotide metabolism: it produces dUMP, the immediate precursor of thymidine nucleotides and it decreases the intracellular concentration of dUTP so that uracil cannot be incorporated into DNA. The protein is Deoxyuridine 5'-triphosphate nucleotidohydrolase of Anaplasma marginale (strain St. Maries).